A 108-amino-acid polypeptide reads, in one-letter code: Protein S100-A15A (108 aa).

Residues 53 to 88 (KEPYYITELFQAADKNKDNQICFDEFLYILGKLVKD) form the EF-hand domain. Ca(2+) is bound by residues aspartate 66, asparagine 68, aspartate 70, glutamine 72, and glutamate 77.

Belongs to the S-100 family.

This is Protein S100-A15A (S100A15A) from Pongo abelii (Sumatran orangutan).